The sequence spans 214 residues: Osteoclast-stimulating factor 1 (214 aa).

An SH3 domain is found at 12–71 (GQVKVYRALFTFDPRTPDELYFEEGDILYISDTSDSNWWKGTCRGRTGLIPSNYVAEQAE). ANK repeat units lie at residues 72–101 (SIDN…GING), 105–135 (AGNT…ELNQ), and 139–168 (LGDT…RTDV).

The protein localises to the cytoplasm. Functionally, induces bone resorption, acting probably through a signaling cascade which results in the secretion of factor(s) enhancing osteoclast formation and activity. This chain is Osteoclast-stimulating factor 1 (ostf1), found in Danio rerio (Zebrafish).